A 188-amino-acid polypeptide reads, in one-letter code: Proline-rich protein 3 (188 aa).

Positions 1-157 (MPKRKKQNHH…DPQVMEDKSD (157 aa)) are disordered. Pro residues-rich tracts occupy residues 35–46 (IGPPSLLGPPPM) and 69–82 (LIPP…PPWG). Residues 83 to 96 (RGPIRRGLGPRSSP) show a composition bias toward low complexity. Basic and acidic residues predominate over residues 145-157 (PKDDPQVMEDKSD). The C3H1-type zinc-finger motif lies at 155 to 183 (KSDRPVCRHFAKKGHCRYEDLCAFYHPGV).

The protein is Proline-rich protein 3 (PRR3) of Homo sapiens (Human).